A 311-amino-acid polypeptide reads, in one-letter code: Oxidoreductase NAD-binding domain-containing protein 1 (311 aa).

The first 17 residues, 1-17 (MACAAVMIPGLLRCSVG), serve as a signal peptide directing secretion. In terms of domain architecture, FAD-binding FR-type spans 50–186 (HMERTASVLR…GGVGINPLLS (137 aa)). Residue 178–183 (GVGINP) coordinates NAD(+).

The sequence is that of Oxidoreductase NAD-binding domain-containing protein 1 (OXNAD1) from Pongo abelii (Sumatran orangutan).